Reading from the N-terminus, the 235-residue chain is Acyl-protein thioesterase 1 (235 aa).

Catalysis depends on charge relay system residues serine 125, aspartate 181, and histidine 213.

The protein belongs to the AB hydrolase superfamily. AB hydrolase 2 family.

Its subcellular location is the cytoplasm. The protein resides in the nucleus. It catalyses the reaction S-hexadecanoyl-L-cysteinyl-[protein] + H2O = L-cysteinyl-[protein] + hexadecanoate + H(+). In terms of biological role, hydrolyzes fatty acids from S-acylated cysteine residues in proteins with a strong preference for palmitoylated G-alpha proteins over other acyl substrates. Mediates the deacylation of G-alpha proteins such as GPA1 in vivo, but has weak or no activity toward palmitoylated Ras proteins. Has weak lysophospholipase activity in vitro; however such activity may not exist in vivo. The sequence is that of Acyl-protein thioesterase 1 from Gibberella zeae (strain ATCC MYA-4620 / CBS 123657 / FGSC 9075 / NRRL 31084 / PH-1) (Wheat head blight fungus).